The primary structure comprises 139 residues: Large ribosomal subunit protein uL24 (139 aa).

The tract at residues 1 to 25 (MKRNTNVSSSRRKSRKAHFTASSGE) is disordered.

The protein belongs to the universal ribosomal protein uL24 family.

The chain is Large ribosomal subunit protein uL24 (rpl26) from Dictyostelium discoideum (Social amoeba).